A 560-amino-acid chain; its full sequence is Oxygen-dependent choline dehydrogenase 1 (560 aa).

FAD is bound at residue 8–37 (DYIIIGAGSAGNVLATRLTEDPDVQVLLLE). Residue H475 is the Proton acceptor of the active site.

Belongs to the GMC oxidoreductase family. FAD serves as cofactor.

It catalyses the reaction choline + A = betaine aldehyde + AH2. The enzyme catalyses betaine aldehyde + NAD(+) + H2O = glycine betaine + NADH + 2 H(+). It participates in amine and polyamine biosynthesis; betaine biosynthesis via choline pathway; betaine aldehyde from choline (cytochrome c reductase route): step 1/1. Its function is as follows. Involved in the biosynthesis of the osmoprotectant glycine betaine. Catalyzes the oxidation of choline to betaine aldehyde and betaine aldehyde to glycine betaine at the same rate. The chain is Oxygen-dependent choline dehydrogenase 1 from Chromohalobacter salexigens (strain ATCC BAA-138 / DSM 3043 / CIP 106854 / NCIMB 13768 / 1H11).